A 391-amino-acid polypeptide reads, in one-letter code: Processive diacylglycerol beta-glucosyltransferase (391 aa).

It belongs to the glycosyltransferase 28 family. UgtP subfamily.

It localises to the cell membrane. The catalysed reaction is a 1,2-diacyl-3-O-(beta-D-glucopyranosyl)-sn-glycerol + UDP-alpha-D-glucose = a 1,2-diacyl-3-O-(beta-D-Glc-(1-&gt;6)-beta-D-Glc)-sn-glycerol + UDP + H(+). It carries out the reaction a 1,2-diacyl-sn-glycerol + UDP-alpha-D-glucose = a 1,2-diacyl-3-O-(beta-D-glucopyranosyl)-sn-glycerol + UDP + H(+). It participates in glycolipid metabolism; diglucosyl-diacylglycerol biosynthesis. In terms of biological role, processive glucosyltransferase involved in the biosynthesis of both the bilayer- and non-bilayer-forming membrane glucolipids. Is able to successively transfer two glucosyl residues to diacylglycerol (DAG), thereby catalyzing the formation of beta-monoglucosyl-DAG (3-O-(beta-D-glucopyranosyl)-1,2-diacyl-sn-glycerol) and beta-diglucosyl-DAG (3-O-(beta-D-glucopyranosyl-beta-(1-&gt;6)-D-glucopyranosyl)-1,2-diacyl-sn-glycerol). Beta-diglucosyl-DAG is the predominant glycolipid found in Bacillales and is also used as a membrane anchor for lipoteichoic acid (LTA). The sequence is that of Processive diacylglycerol beta-glucosyltransferase from Staphylococcus epidermidis (strain ATCC 12228 / FDA PCI 1200).